The sequence spans 328 residues: BRISC and BRCA1-A complex member 1 (328 aa).

The span at 1–13 (MDNSTEETFSMDT) shows a compositional bias: polar residues. Positions 1 to 84 (MDNSTEETFS…STPPPTLEFQ (84 aa)) are disordered. The segment covering 64–74 (PLPTTTTVPTN) has biased composition (low complexity). Residues 96–297 (VIICLDLSEE…LELHNCMARL (202 aa)) form a VWFA-like region.

The protein belongs to the BABAM1 family. As to quaternary structure, component of the ARISC complex, at least composed of uimc1/rap80, abraxas1, brcc3/brcc36, BABAM2 and babam1/nba1. Component of the BRCA1-A complex, at least composed of brca1, bard1, uimc1/rap80, abraxas1, brcc3/brcc36, BABAM2 and babam1/nba1. In the BRCA1-A complex, interacts directly with abraxas1 and BABAM2. Component of the BRISC complex, at least composed of abraxas2, brcc3/brcc36, babam2 and babam1/nba1.

The protein localises to the cytoplasm. The protein resides in the nucleus. In terms of biological role, component of the BRCA1-A complex, a complex that specifically recognizes 'Lys-63'-linked ubiquitinated histones H2A and H2AX at DNA lesions sites, leading to target the BRCA1-BARD1 heterodimer to sites of DNA damage at double-strand breaks (DSBs). The BRCA1-A complex also possesses deubiquitinase activity that specifically removes 'Lys-63'-linked ubiquitin on histones H2A and H2AX. In the BRCA1-A complex, it is required for the complex integrity and its localization at DSBs. Component of the BRISC complex, a multiprotein complex that specifically cleaves 'Lys-63'-linked ubiquitin in various substrates. In these 2 complexes, it is probably required to maintain the stability of babam2 and help the 'Lys-63'-linked deubiquitinase activity mediated by brcc3/brcc36 component. The BRISC complex is required for normal mitotic spindle assembly and microtubule attachment to kinetochores via its role in deubiquitinating numa1. Plays a role in interferon signaling via its role in the deubiquitination of the interferon receptor ifnar1; deubiquitination increases ifnar1 activity by enhancing its stability and cell surface expression. Down-regulates the response to bacterial lipopolysaccharide (LPS) via its role in ifnar1 deubiquitination. The protein is BRISC and BRCA1-A complex member 1 (babam1) of Xenopus laevis (African clawed frog).